A 173-amino-acid chain; its full sequence is Shikimate kinase 2 (173 aa).

12–17 (GCGKTT) serves as a coordination point for ATP. Residues Thr-16 and Asp-32 each contribute to the Mg(2+) site. Substrate-binding residues include Asp-34, Arg-58, and Gly-79. The segment at 112 to 126 (EENPQDNQRPTLTGR) is LID domain. Position 120 (Arg-120) interacts with ATP. A substrate-binding site is contributed by Arg-139. Gln-155 lines the ATP pocket.

Belongs to the shikimate kinase family. AroL subfamily. As to quaternary structure, monomer. Requires Mg(2+) as cofactor.

The protein localises to the cytoplasm. The enzyme catalyses shikimate + ATP = 3-phosphoshikimate + ADP + H(+). It participates in metabolic intermediate biosynthesis; chorismate biosynthesis; chorismate from D-erythrose 4-phosphate and phosphoenolpyruvate: step 5/7. In terms of biological role, catalyzes the specific phosphorylation of the 3-hydroxyl group of shikimic acid using ATP as a cosubstrate. The chain is Shikimate kinase 2 from Pectobacterium atrosepticum (strain SCRI 1043 / ATCC BAA-672) (Erwinia carotovora subsp. atroseptica).